The following is a 342-amino-acid chain: Putative ABC transporter anion-binding protein HVO_1888 (342 aa).

Positions 1-32 form a signal peptide, tat-type signal; sequence MAIERRRFLQAAGVGAVLGLSGCTGNTSPPQA. Over residues 24-37 the composition is skewed to polar residues; the sequence is TGNTSPPQANNETA. A disordered region spans residues 24 to 52; the sequence is TGNTSPPQANNETAEGSGGSESGDGSTQE.

As to quaternary structure, the complex is composed of two ATP-binding proteins (HVO_1886), two transmembrane proteins (HVO_1887) and a solute-binding protein (HVO_1888). Post-translationally, predicted to be exported by the Tat system. The position of the signal peptide cleavage has not been experimentally proven.

Its function is as follows. Part of an ABC transporter complex involved in anions import. The chain is Putative ABC transporter anion-binding protein HVO_1888 from Haloferax volcanii (strain ATCC 29605 / DSM 3757 / JCM 8879 / NBRC 14742 / NCIMB 2012 / VKM B-1768 / DS2) (Halobacterium volcanii).